The following is a 343-amino-acid chain: MLVLGIETSCDETGIALYDGERGLLAHTLYSQIKLHADYGGVVPELASRDHVRKVIPLIEEVLNQAGVGKSDIDAIAYTAGPGLVGALMVGGAIASALAYALGIPTIGVHHMEGHLLAPMLEENPPEFPFVALLVSGGHTQLVRVDGVGEYELLGESVDDAAGEAFDKVAKMLGLDYPGGPQVAKLAEEGNLQRFKFPRPMTDRPGLDFSFSGLKTFTLNTLQEAEASGGVDDNLRADVAACFQEAVVETMVIKCRRALRQTGLKRLIMAGGVSANRRLREKLQQMVKGEKALVYYARPEFCTDNGAMIAYAGHQRLAVGQRGDLSVLATPRWPLVELPSIKG.

Fe cation-binding residues include His-111 and His-115. Residues 134 to 138, Asp-167, Gly-180, and Asn-276 contribute to the substrate site; that span reads LVSGG. Asp-304 contacts Fe cation.

This sequence belongs to the KAE1 / TsaD family. Fe(2+) is required as a cofactor.

Its subcellular location is the cytoplasm. It carries out the reaction L-threonylcarbamoyladenylate + adenosine(37) in tRNA = N(6)-L-threonylcarbamoyladenosine(37) in tRNA + AMP + H(+). Required for the formation of a threonylcarbamoyl group on adenosine at position 37 (t(6)A37) in tRNAs that read codons beginning with adenine. Is involved in the transfer of the threonylcarbamoyl moiety of threonylcarbamoyl-AMP (TC-AMP) to the N6 group of A37, together with TsaE and TsaB. TsaD likely plays a direct catalytic role in this reaction. The protein is tRNA N6-adenosine threonylcarbamoyltransferase of Hahella chejuensis (strain KCTC 2396).